The sequence spans 198 residues: METLLAFKVKGGVLCLADSSVNHSIVKMKDDEDKILEIDGHKLLLSAGEAGDRVQFTEYISKNIKLYSLRNSYPMSTPAAANFIRNELATSIRSHPYSINLILAGYDKEVEDGGTSLYYMDYLGSLQKLNFGCHGYASYFLLGLLDRHHKCDLSLEDGINLMHLCTTELKTRFLVSGKYTLKFVSSEGIKVLPFNAPQ.

This sequence belongs to the peptidase T1B family. The 26S proteasome consists of a 20S proteasome core and two 19S regulatory subunits. The 20S proteasome core is composed of 28 subunits that are arranged in four stacked rings, resulting in a barrel-shaped structure. The two end rings are each formed by seven alpha subunits, and the two central rings are each formed by seven beta subunits. The catalytic chamber with the active sites is on the inside of the barrel.

The protein resides in the cytoplasm. The protein localises to the nucleus. Non-catalytic component of the proteasome, a multicatalytic proteinase complex which is characterized by its ability to cleave peptides with Arg, Phe, Tyr, Leu, and Glu adjacent to the leaving group at neutral or slightly basic pH. The proteasome has an ATP-dependent proteolytic activity. The polypeptide is Proteasome subunit beta type-2 (psmB2) (Dictyostelium discoideum (Social amoeba)).